The primary structure comprises 305 residues: Homoserine O-acetyltransferase (305 aa).

C142 (acyl-thioester intermediate) is an active-site residue. Residues K163 and S192 each coordinate substrate. The Proton acceptor role is filled by H235. E237 is a catalytic residue. R249 is a substrate binding site.

Belongs to the MetA family.

It localises to the cytoplasm. It catalyses the reaction L-homoserine + acetyl-CoA = O-acetyl-L-homoserine + CoA. Its pathway is amino-acid biosynthesis; L-methionine biosynthesis via de novo pathway; O-acetyl-L-homoserine from L-homoserine: step 1/1. Functionally, transfers an acetyl group from acetyl-CoA to L-homoserine, forming acetyl-L-homoserine. The polypeptide is Homoserine O-acetyltransferase (Bacteroides fragilis (strain ATCC 25285 / DSM 2151 / CCUG 4856 / JCM 11019 / LMG 10263 / NCTC 9343 / Onslow / VPI 2553 / EN-2)).